A 557-amino-acid chain; its full sequence is Dihydroxy-acid dehydratase (557 aa).

Asp78 is a binding site for Mg(2+). [2Fe-2S] cluster is bound at residue Cys119. Mg(2+) contacts are provided by Asp120 and Lys121. The residue at position 121 (Lys121) is an N6-carboxylysine. A [2Fe-2S] cluster-binding site is contributed by Cys192. Glu442 contributes to the Mg(2+) binding site. Catalysis depends on Ser468, which acts as the Proton acceptor.

It belongs to the IlvD/Edd family. Homodimer. Requires [2Fe-2S] cluster as cofactor. It depends on Mg(2+) as a cofactor.

The catalysed reaction is (2R)-2,3-dihydroxy-3-methylbutanoate = 3-methyl-2-oxobutanoate + H2O. It catalyses the reaction (2R,3R)-2,3-dihydroxy-3-methylpentanoate = (S)-3-methyl-2-oxopentanoate + H2O. The protein operates within amino-acid biosynthesis; L-isoleucine biosynthesis; L-isoleucine from 2-oxobutanoate: step 3/4. It participates in amino-acid biosynthesis; L-valine biosynthesis; L-valine from pyruvate: step 3/4. Functionally, functions in the biosynthesis of branched-chain amino acids. Catalyzes the dehydration of (2R,3R)-2,3-dihydroxy-3-methylpentanoate (2,3-dihydroxy-3-methylvalerate) into 2-oxo-3-methylpentanoate (2-oxo-3-methylvalerate) and of (2R)-2,3-dihydroxy-3-methylbutanoate (2,3-dihydroxyisovalerate) into 2-oxo-3-methylbutanoate (2-oxoisovalerate), the penultimate precursor to L-isoleucine and L-valine, respectively. This Bacillus cereus (strain ZK / E33L) protein is Dihydroxy-acid dehydratase.